Consider the following 1028-residue polypeptide: Pro-apoptotic serine protease nma111 (1028 aa).

The disordered stretch occupies residues 1 to 45; it reads MDMSGESSIKRRRSSIAASAERPAKHLRPENSTLTPGDATPANGT. Positions 82–266 are serine protease; that stretch reads VVSIHFCQTC…AATDYFLPLD (185 aa). Catalysis depends on charge relay system residues His120, Asp151, and Ser233. PDZ domains lie at 289 to 374 and 876 to 957; these read QWIL…LLVQ and VFCG…VTFD.

The protein belongs to the peptidase S1C family.

Its subcellular location is the nucleus. Nuclear serine protease which mediates apoptosis. The sequence is that of Pro-apoptotic serine protease nma111 (nma111) from Aspergillus clavatus (strain ATCC 1007 / CBS 513.65 / DSM 816 / NCTC 3887 / NRRL 1 / QM 1276 / 107).